The sequence spans 101 residues: Small ribosomal subunit protein uS14 (101 aa).

It belongs to the universal ribosomal protein uS14 family. In terms of assembly, part of the 30S ribosomal subunit. Contacts proteins S3 and S10.

Its function is as follows. Binds 16S rRNA, required for the assembly of 30S particles and may also be responsible for determining the conformation of the 16S rRNA at the A site. The chain is Small ribosomal subunit protein uS14 from Caulobacter vibrioides (strain ATCC 19089 / CIP 103742 / CB 15) (Caulobacter crescentus).